The sequence spans 670 residues: NADH-ubiquinone oxidoreductase chain 5 (670 aa).

A run of 19 helical transmembrane segments spans residues 1–21 (MYIVNLILPLIGSIITGIFGH), 31–51 (IAVGCMMLTAISSLYIGYEIL), 81–101 (LTSIMIIVITCISSMVHLYSM), 111–131 (TRFFSYLSLFTFFMMLLVTAD), 133–153 (FVQLFFGWEGVGIMSYLLINF), 178–198 (LFFGILLVFLVFKSVDFSVIF), 211–231 (LLGYEVNAITLIGSFIVIGVV), 251–271 (TPVSALLHAATMVTAGVFLVL), 283–303 (ILNILTIIGALTTLFATTIGI), 311–331 (VIAYSTCSQLGYMIFACGLLN), 339–359 (LTTHAFFKALLFLSAGSVIHG), 375–395 (LMPLTYQCMLIGTLALTGFPF), 421–441 (AIIGYVAAFGTTFYSFRLLIL), 462–482 (TNMVIPLVILALCSIFIGYVT), 519–539 (LLPLFAFIYGVITPVLFYFNI), 566–586 (FDFLSRVLIVVPFFHLSYDVM), 594–614 (LWEKIGVTGVATTLVTAFTAL), 629–649 (IVQTIILIIVVGIFSFMTGFI), and 650–670 (YMELCIIIGILYICLPSIKID).

The protein belongs to the complex I subunit 5 family.

It is found in the mitochondrion inner membrane. It carries out the reaction a ubiquinone + NADH + 5 H(+)(in) = a ubiquinol + NAD(+) + 4 H(+)(out). Its function is as follows. Core subunit of the mitochondrial membrane respiratory chain NADH dehydrogenase (Complex I) that is believed to belong to the minimal assembly required for catalysis. Complex I functions in the transfer of electrons from NADH to the respiratory chain. The immediate electron acceptor for the enzyme is believed to be ubiquinone. The chain is NADH-ubiquinone oxidoreductase chain 5 (nad5) from Dictyostelium discoideum (Social amoeba).